The primary structure comprises 170 residues: Viral interleukin-10 homolog (170 aa).

The N-terminal stretch at 1 to 23 (MERRLVVTLQCLVLLYLAPECGG) is a signal peptide. Cystine bridges form between Cys27–Cys119 and Cys73–Cys125. A coiled-coil region spans residues 97-145 (EAKDHVNSLGENLKTLRLRLRRCHRFLPCENKSKAVEQIKNAFNKLQEK). N-linked (GlcNAc...) asparagine; by host glycosylation occurs at Asn127.

Belongs to the IL-10 family. As to quaternary structure, homodimer.

It is found in the secreted. Functionally, inhibits IFN-gamma synthesis. Down-regulates the expression of the host TAP1 gene (transporter associated with antigen processing), thereby affecting the transport of peptides into the endoplasmic reticulum and subsequent peptide loading by MHC class I molecules. In consequence, infected cells are masked for immune recognition by cytotoxic T-lymphocytes. The protein is Viral interleukin-10 homolog of Epstein-Barr virus (strain AG876) (HHV-4).